The sequence spans 254 residues: Long form salivary protein D7LC (254 aa).

The signal sequence occupies residues 1–19 (MNAVITSLLFLSLVGLGYS). Intrachain disulfides connect Cys36–Cys66 and Cys62–Cys112. Position 49 (Trp49) interacts with thromboxane A2. Position 52 (Trp52) interacts with leukotriene C4. Residue Tyr63 participates in thromboxane A2 binding. Residues Gly136 and Lys154 each coordinate leukotriene C4. Lys154 is a thromboxane A2 binding site. 3 disulfide bridges follow: Cys162–Cys178, Cys174–Cys221, and Cys211–Cys230.

Belongs to the PBP/GOBP family.

The protein localises to the secreted. Functionally, modulates blood feeding of female sandflies on vertebrate species by binding and sequestering different mediators involved in the host response. Binds leukotriene C4, leukotriene D4, leukotriene E4 and U-46619, a stable analog of thromboxane A2. Does not bind histamine or serotonin. Inhibits platelet aggregation induced by low concentrations of collagen in thromboxane A2-dependent manner. The protein is Long form salivary protein D7LC of Phlebotomus papatasi (Sandfly).